We begin with the raw amino-acid sequence, 121 residues long: Small ribosomal subunit protein uS13 (121 aa).

Residues 95 to 121 form a disordered region; it reads LPVRGQNTKNNARTRKGKAVAIAGKKK. Basic residues predominate over residues 106–121; sequence ARTRKGKAVAIAGKKK.

This sequence belongs to the universal ribosomal protein uS13 family. In terms of assembly, part of the 30S ribosomal subunit. Forms a loose heterodimer with protein S19. Forms two bridges to the 50S subunit in the 70S ribosome.

In terms of biological role, located at the top of the head of the 30S subunit, it contacts several helices of the 16S rRNA. In the 70S ribosome it contacts the 23S rRNA (bridge B1a) and protein L5 of the 50S subunit (bridge B1b), connecting the 2 subunits; these bridges are implicated in subunit movement. Contacts the tRNAs in the A and P-sites. The sequence is that of Small ribosomal subunit protein uS13 from Streptococcus equi subsp. zooepidemicus (strain H70).